Here is a 342-residue protein sequence, read N- to C-terminus: S-adenosylmethionine:tRNA ribosyltransferase-isomerase (342 aa).

It belongs to the QueA family. As to quaternary structure, monomer.

The protein resides in the cytoplasm. It catalyses the reaction 7-aminomethyl-7-carbaguanosine(34) in tRNA + S-adenosyl-L-methionine = epoxyqueuosine(34) in tRNA + adenine + L-methionine + 2 H(+). It participates in tRNA modification; tRNA-queuosine biosynthesis. Transfers and isomerizes the ribose moiety from AdoMet to the 7-aminomethyl group of 7-deazaguanine (preQ1-tRNA) to give epoxyqueuosine (oQ-tRNA). In Shouchella clausii (strain KSM-K16) (Alkalihalobacillus clausii), this protein is S-adenosylmethionine:tRNA ribosyltransferase-isomerase.